The sequence spans 633 residues: MA3 DOMAIN-CONTAINING TRANSLATION REGULATORY FACTOR 4 (633 aa).

4 MI domains span residues 56 to 177 (DYKR…RAKK), 220 to 341 (ETKR…ERSD), 351 to 472 (RFKK…EISN), and 514 to 633 (DAKD…STDS). The short motif at 94 to 101 (VKRLVSMA) is the Nuclear localization signal 1 element. The short motif at 389–396 (LKKLITLA) is the Nuclear localization signal 2 element.

The protein belongs to the PDCD4 family. Binds to EIF4A1. The association with ribosomes is modulated by cellular energy status and TOR activity. Mostly expressed, at low levels, in rosette leaves and flower buds, and, to a lower extent, in roots, stems, cauline leaves and flowers.

It is found in the nucleus. The protein resides in the cytoplasm. It localises to the cytosol. In terms of biological role, involved in target of rapamycin (TOR)-regulated translation control, especially under energy-deficient conditions. This chain is MA3 DOMAIN-CONTAINING TRANSLATION REGULATORY FACTOR 4, found in Arabidopsis thaliana (Mouse-ear cress).